The chain runs to 729 residues: Fatty acid oxidation complex subunit alpha (729 aa).

Residues 1–189 (MLYQGESLYL…KVGLVQAVVA (189 aa)) are enoyl-CoA hydratase/isomerase. Aspartate 296 serves as a coordination point for substrate. Positions 311-729 (PVPQQAAVLG…HADVSHGQPA (419 aa)) are 3-hydroxyacyl-CoA dehydrogenase. NAD(+)-binding positions include methionine 324, aspartate 343, 400–402 (VVE), lysine 407, and serine 429. Histidine 450 functions as the For 3-hydroxyacyl-CoA dehydrogenase activity in the catalytic mechanism. Residue asparagine 453 coordinates NAD(+). Positions 500 and 660 each coordinate substrate.

It in the N-terminal section; belongs to the enoyl-CoA hydratase/isomerase family. The protein in the C-terminal section; belongs to the 3-hydroxyacyl-CoA dehydrogenase family. In terms of assembly, heterotetramer of two alpha chains (FadB) and two beta chains (FadA).

The catalysed reaction is a (3S)-3-hydroxyacyl-CoA + NAD(+) = a 3-oxoacyl-CoA + NADH + H(+). It catalyses the reaction a (3S)-3-hydroxyacyl-CoA = a (2E)-enoyl-CoA + H2O. The enzyme catalyses a 4-saturated-(3S)-3-hydroxyacyl-CoA = a (3E)-enoyl-CoA + H2O. It carries out the reaction (3S)-3-hydroxybutanoyl-CoA = (3R)-3-hydroxybutanoyl-CoA. The catalysed reaction is a (3Z)-enoyl-CoA = a 4-saturated (2E)-enoyl-CoA. It catalyses the reaction a (3E)-enoyl-CoA = a 4-saturated (2E)-enoyl-CoA. It participates in lipid metabolism; fatty acid beta-oxidation. Involved in the aerobic and anaerobic degradation of long-chain fatty acids via beta-oxidation cycle. Catalyzes the formation of 3-oxoacyl-CoA from enoyl-CoA via L-3-hydroxyacyl-CoA. It can also use D-3-hydroxyacyl-CoA and cis-3-enoyl-CoA as substrate. In Pectobacterium atrosepticum (strain SCRI 1043 / ATCC BAA-672) (Erwinia carotovora subsp. atroseptica), this protein is Fatty acid oxidation complex subunit alpha.